A 354-amino-acid polypeptide reads, in one-letter code: 3'-5' exonuclease (354 aa).

The interval 1-120 is disordered; that stretch reads MERFLTKMPI…PSPEKEKPEK (120 aa). Composition is skewed to basic and acidic residues over residues 13–30 and 37–50; these read KANE…ETPK and KKDT…KENA. Basic residues predominate over residues 59-70; sequence TKGRPGRPAAKR. Residues 71-91 are compositionally biased toward basic and acidic residues; sequence KNLDTPDVKDEKIAMEEENPP. S104, S110, and S112 each carry phosphoserine. The 166-residue stretch at 149–314 folds into the 3'-5' exonuclease domain; that stretch reads WVEKQKDDVV…GQVIYRELER (166 aa). Positions 163, 165, and 301 each coordinate Mg(2+).

It belongs to the WRNexo family.

It is found in the nucleus. In terms of biological role, has exonuclease activity on both single-stranded and duplex templates bearing overhangs, but not blunt ended duplex DNA, and cleaves in a 3'-5' direction. Essential for the formation of DNA replication focal centers. Has an important role in maintaining genome stability. The protein is 3'-5' exonuclease of Drosophila simulans (Fruit fly).